Here is a 253-residue protein sequence, read N- to C-terminus: 5'/3'-nucleotidase SurE (253 aa).

A divalent metal cation-binding residues include D8, D9, S39, and N92.

This sequence belongs to the SurE nucleotidase family. The cofactor is a divalent metal cation.

Its subcellular location is the cytoplasm. It carries out the reaction a ribonucleoside 5'-phosphate + H2O = a ribonucleoside + phosphate. It catalyses the reaction a ribonucleoside 3'-phosphate + H2O = a ribonucleoside + phosphate. The catalysed reaction is [phosphate](n) + H2O = [phosphate](n-1) + phosphate + H(+). Nucleotidase with a broad substrate specificity as it can dephosphorylate various ribo- and deoxyribonucleoside 5'-monophosphates and ribonucleoside 3'-monophosphates with highest affinity to 3'-AMP. Also hydrolyzes polyphosphate (exopolyphosphatase activity) with the preference for short-chain-length substrates (P20-25). Might be involved in the regulation of dNTP and NTP pools, and in the turnover of 3'-mononucleotides produced by numerous intracellular RNases (T1, T2, and F) during the degradation of various RNAs. This Enterobacter sp. (strain 638) protein is 5'/3'-nucleotidase SurE.